The sequence spans 157 residues: Crossover junction endodeoxyribonuclease RuvC (157 aa).

Catalysis depends on residues Asp7, Glu66, and Asp139. Positions 7, 66, and 139 each coordinate Mg(2+).

This sequence belongs to the RuvC family. In terms of assembly, homodimer which binds Holliday junction (HJ) DNA. The HJ becomes 2-fold symmetrical on binding to RuvC with unstacked arms; it has a different conformation from HJ DNA in complex with RuvA. In the full resolvosome a probable DNA-RuvA(4)-RuvB(12)-RuvC(2) complex forms which resolves the HJ. Mg(2+) serves as cofactor.

The protein localises to the cytoplasm. It catalyses the reaction Endonucleolytic cleavage at a junction such as a reciprocal single-stranded crossover between two homologous DNA duplexes (Holliday junction).. In terms of biological role, the RuvA-RuvB-RuvC complex processes Holliday junction (HJ) DNA during genetic recombination and DNA repair. Endonuclease that resolves HJ intermediates. Cleaves cruciform DNA by making single-stranded nicks across the HJ at symmetrical positions within the homologous arms, yielding a 5'-phosphate and a 3'-hydroxyl group; requires a central core of homology in the junction. The consensus cleavage sequence is 5'-(A/T)TT(C/G)-3'. Cleavage occurs on the 3'-side of the TT dinucleotide at the point of strand exchange. HJ branch migration catalyzed by RuvA-RuvB allows RuvC to scan DNA until it finds its consensus sequence, where it cleaves and resolves the cruciform DNA. This chain is Crossover junction endodeoxyribonuclease RuvC, found in Helicobacter pylori (strain Shi470).